Reading from the N-terminus, the 1576-residue chain is Proton channel OtopLc (1576 aa).

Disordered regions lie at residues 1-602 (MDSS…SSPP) and 621-736 (QIGS…SSPV). Low complexity-rich tracts occupy residues 58 to 67 (SLAEEVLLLV) and 76 to 85 (LLGQPLPTLT). Composition is skewed to acidic residues over residues 103 to 116 (DEGD…EPVP), 159 to 171 (DDGE…DAEE), 186 to 198 (SNPD…EEQE), and 206 to 216 (PKEEDEEEDDD). Positions 219–228 (TPPPPLPPLP) are enriched in pro residues. Polar residues predominate over residues 229–241 (SNFSYVQGHNLGQ). N-linked (GlcNAc...) asparagine glycosylation is present at Asn230. Residues 243-252 (TPPLTKSPSN) show a composition bias toward low complexity. Pro residues predominate over residues 253-264 (SPSPPVTPPPCP). Asn267 carries an N-linked (GlcNAc...) asparagine glycan. Positions 316–341 (DQPEPEDQPPEPENEPEPEPEPEPEP) are enriched in acidic residues. Positions 347-356 (AREDYSRSLD) are enriched in basic and acidic residues. Residues 362 to 376 (TTITTPPSNGYSASS) show a composition bias toward polar residues. Basic and acidic residues predominate over residues 384–393 (HFAELDEDRG). Over residues 402-419 (QEPEEEVEEEEEEEEEEL) the composition is skewed to acidic residues. Residues 420–433 (TKETDEISVDRESL) show a composition bias toward basic and acidic residues. The segment covering 434-457 (QDQGGDSISSPRPASILTGSISTS) has biased composition (polar residues). The span at 465–507 (SPKPESRGPSRSGSQRSQLRSGSQQGSIAESRGGSRIGSRTGS) shows a compositional bias: low complexity. 2 stretches are compositionally biased toward polar residues: residues 519-534 (PQAS…SQGQ) and 545-555 (KSGSQRMQSPQ). The span at 563–575 (MPSPPLMRSPPPE) shows a compositional bias: pro residues. The segment covering 661 to 685 (AAAAPAVTTTAATTAVTSQPRSHFT) has biased composition (low complexity). Over residues 686–709 (SSHHHYHLPHQFQHPHHQNHHTHS) the composition is skewed to basic residues. The helical transmembrane segment at 741 to 761 (LFMAGVAPPIAAGAGSLMAMP) threads the bilayer. The disordered stretch occupies residues 771 to 845 (GRVSARSGSQ…GSSSQPALSG (75 aa)). Residues 776 to 799 (RSGSQHHVTIDESSLPSHKGNIQE) are compositionally biased toward polar residues. The segment covering 826–839 (DSSDPPSSPGGSSS) has biased composition (low complexity). The next 2 membrane-spanning stretches (helical) occupy residues 891 to 911 (ALAT…GIAF) and 931 to 951 (LYLY…LIWG). The segment covering 962 to 973 (PSKSATKASGTD) has biased composition (polar residues). Residues 962 to 1001 (PSKSATKASGTDSMDESDTDSNSVHHRLPPPIPVRRPSLL) are disordered. The next 3 membrane-spanning stretches (helical) occupy residues 1019–1039 (GAVA…GQYF), 1051–1071 (LLAL…YFIF), and 1084–1104 (IIAR…WLNV). Asn1121 carries an N-linked (GlcNAc...) asparagine glycan. A run of 7 helical transmembrane segments spans residues 1179–1199 (FLFP…YVMW), 1239–1259 (FVGI…FVLI), 1272–1292 (VTIC…VGMI), 1310–1330 (ILLV…VIAG), 1340–1360 (LVPI…MFIL), 1381–1401 (IVTF…LEKS), and 1412–1432 (FYGL…AIFY). The N-linked (GlcNAc...) asparagine glycan is linked to Asn1479. A disordered region spans residues 1498 to 1549 (EEVDSGESNSAEDAGAGAGSGGSRGSGGGAGAAEAGEAGEEGQQGGDSSCGL). A compositionally biased stretch (low complexity) spans 1503-1512 (GESNSAEDAG). The span at 1513–1528 (AGAGSGGSRGSGGGAG) shows a compositional bias: gly residues.

The protein belongs to the otopetrin family.

The protein localises to the cell membrane. Its function is as follows. Proton-selective channel that specifically transports protons into cells. Proton-selective channel activity is probably required in cell types that use changes in intracellular pH for cell signaling or to regulate biochemical or developmental processes. The protein is Proton channel OtopLc of Drosophila melanogaster (Fruit fly).